The primary structure comprises 1498 residues: DNA-directed RNA polymerase subunit beta' (1498 aa).

Zn(2+)-binding residues include cysteine 67, cysteine 69, cysteine 82, and cysteine 85. Mg(2+) is bound by residues aspartate 499, aspartate 501, and aspartate 503. The Zn(2+) site is built by cysteine 867, cysteine 943, cysteine 950, and cysteine 953.

This sequence belongs to the RNA polymerase beta' chain family. The RNAP catalytic core consists of 2 alpha, 1 beta, 1 beta' and 1 omega subunit. When a sigma factor is associated with the core the holoenzyme is formed, which can initiate transcription. The cofactor is Mg(2+). Zn(2+) serves as cofactor.

The catalysed reaction is RNA(n) + a ribonucleoside 5'-triphosphate = RNA(n+1) + diphosphate. DNA-dependent RNA polymerase catalyzes the transcription of DNA into RNA using the four ribonucleoside triphosphates as substrates. This chain is DNA-directed RNA polymerase subunit beta', found in Chlorobium luteolum (strain DSM 273 / BCRC 81028 / 2530) (Pelodictyon luteolum).